Consider the following 302-residue polypeptide: Rab effector Noc2 (302 aa).

In terms of domain architecture, RabBD spans 41-158; it reads QRRSQCLSPG…KRSGAWFYKG (118 aa). The segment at 89 to 146 adopts an FYVE-type zinc-finger fold; sequence GNGLSQCLLCGEVLGFLGSSSVFCKDCRKKVCTKCGIEASPGQKRPLWLCKICSEQRE. The Zn(2+) site is built by Cys95, Cys98, Cys112, Cys115, Cys120, Cys123, Cys138, and Cys141. Residues 174–302 form a disordered region; that stretch reads DPHFRPLPVE…KRHTWATPRY (129 aa). The span at 185–197 shows a compositional bias: polar residues; it reads TETQPPSAETSRV. Phosphoserine is present on Ser248. The span at 258–269 shows a compositional bias: low complexity; the sequence is SHLSGSQSSLGS.

As to quaternary structure, recruited to dense-core vesicles through specific interaction with RAB27A in endocrine cells. Interacts with RAB3A, RAB3B, RAB3C and RAB3D. Interacts with ZYX. As to expression, highly expressed in pancreatic islets. High to moderate expression in adrenal gland, pituitary gland and ovary.

The protein resides in the cytoplasm. Its subcellular location is the cytoplasmic vesicle. The protein localises to the secretory vesicle membrane. Rab GTPase effector involved in the late steps of regulated exocytosis, both in endocrine and exocrine cells. Regulates the exocytosis of dense-core vesicles in neuroendocrine cells through interaction with RAB27A. Acts as a potential RAB3B effector protein in epithelial cells. The sequence is that of Rab effector Noc2 (Rph3al) from Mus musculus (Mouse).